Reading from the N-terminus, the 274-residue chain is Dehydration-responsive element-binding protein 2A (274 aa).

Composition is skewed to basic and acidic residues over residues 1–10 (MERGEGRRGD) and 35–50 (KWWK…ENSS). The segment at 1–75 (MERGEGRRGD…KGGPENSNCA (75 aa)) is disordered. Residues 75-132 (AYRGVRQRTWGKWVAEIREPNRGRRLWLGSFPTALEAAHAYDEAARAMYGPTARVNFA) constitute a DNA-binding region (AP2/ERF).

It belongs to the AP2/ERF transcription factor family. ERF subfamily.

The protein localises to the nucleus. Transcriptional activator that binds specifically to the DNA sequence 5'-[AG]CCGAC-3'. Binding to the C-repeat/DRE element mediates high salinity- and dehydration-inducible transcription. The sequence is that of Dehydration-responsive element-binding protein 2A (DREB2A) from Oryza sativa subsp. indica (Rice).